We begin with the raw amino-acid sequence, 538 residues long: Cytochrome P450 monooxygenase cfoH (538 aa).

Residues 24 to 44 traverse the membrane as a helical segment; it reads VLTFFAILLVAILLWYMIPYF. Residue cysteine 471 coordinates heme.

This sequence belongs to the cytochrome P450 family. It depends on heme as a cofactor.

It localises to the membrane. It functions in the pathway secondary metabolite biosynthesis; flavonoid biosynthesis. Its function is as follows. Cytochrome P450 monooxygenase; part of the gene cluster that mediates the biosynthesis of chlorflavonin, a fungal flavonoid with acetolactate synthase inhibitory activity. Within the pathway, cfoH is responsible for the hydroxylation of the flavonoid skeleton at position C2'. The pathway begins with the PKS-NRPS hybrid synthetase cfoA that uses benzoic acid or p-hydroxybenzoic acid as a starter unit with four rounds of chain elongation using malonyl-CoA to form the chalcone skeleton. Then, a new type of chalcone isomerase, cfoK, catalyzes the conversion of the chalcone into a flavanone by a histidine-mediated oxa-Michael addition mechanism. The desaturation of flavanone to flavone is catalyzed by a new type of flavone synthase, the flavin mononucleotide (FMN)-dependent oxidoreductase cfoJ. Monooxygenases cfoF, cfoG, and P450 cfoH are responsible for the hydroxylation of the flavonoid skeleton at sites C3, C8, and C2', respectively. Like cfoF, the dehydratase cfoI plays also a role in the hydroxylation of position C3. Methyltransferases cfoB, cfoC, and cfoD then catalyze the methylation of C7-OH, C8-OH, and C3-OH, respectively. Finally, the monooxygenase cfoE is responsible for the chlorination of flavonoid at position C3'. In Aspergillus candidus, this protein is Cytochrome P450 monooxygenase cfoH.